Consider the following 366-residue polypeptide: Anhydro-N-acetylmuramic acid kinase (366 aa).

G10–D17 contributes to the ATP binding site.

The protein belongs to the anhydro-N-acetylmuramic acid kinase family.

The enzyme catalyses 1,6-anhydro-N-acetyl-beta-muramate + ATP + H2O = N-acetyl-D-muramate 6-phosphate + ADP + H(+). It functions in the pathway amino-sugar metabolism; 1,6-anhydro-N-acetylmuramate degradation. The protein operates within cell wall biogenesis; peptidoglycan recycling. Catalyzes the specific phosphorylation of 1,6-anhydro-N-acetylmuramic acid (anhMurNAc) with the simultaneous cleavage of the 1,6-anhydro ring, generating MurNAc-6-P. Is required for the utilization of anhMurNAc either imported from the medium or derived from its own cell wall murein, and thus plays a role in cell wall recycling. This Legionella pneumophila (strain Lens) protein is Anhydro-N-acetylmuramic acid kinase.